The following is a 180-amino-acid chain: Acireductone dioxygenase (180 aa).

Residues H97, H99, E103, and H141 each coordinate Fe(2+). H97, H99, E103, and H141 together coordinate Ni(2+).

Belongs to the acireductone dioxygenase (ARD) family. As to quaternary structure, monomer. Fe(2+) serves as cofactor. Requires Ni(2+) as cofactor.

The enzyme catalyses 1,2-dihydroxy-5-(methylsulfanyl)pent-1-en-3-one + O2 = 3-(methylsulfanyl)propanoate + CO + formate + 2 H(+). It catalyses the reaction 1,2-dihydroxy-5-(methylsulfanyl)pent-1-en-3-one + O2 = 4-methylsulfanyl-2-oxobutanoate + formate + 2 H(+). It participates in amino-acid biosynthesis; L-methionine biosynthesis via salvage pathway; L-methionine from S-methyl-5-thio-alpha-D-ribose 1-phosphate: step 5/6. In terms of biological role, catalyzes 2 different reactions between oxygen and the acireductone 1,2-dihydroxy-3-keto-5-methylthiopentene (DHK-MTPene) depending upon the metal bound in the active site. Fe-containing acireductone dioxygenase (Fe-ARD) produces formate and 2-keto-4-methylthiobutyrate (KMTB), the alpha-ketoacid precursor of methionine in the methionine recycle pathway. Ni-containing acireductone dioxygenase (Ni-ARD) produces methylthiopropionate, carbon monoxide and formate, and does not lie on the methionine recycle pathway. This is Acireductone dioxygenase from Serratia proteamaculans (strain 568).